Reading from the N-terminus, the 257-residue chain is Putative hydro-lyase Bcen2424_3550 (257 aa).

Belongs to the D-glutamate cyclase family.

The sequence is that of Putative hydro-lyase Bcen2424_3550 from Burkholderia cenocepacia (strain HI2424).